The following is a 65-amino-acid chain: MPGRDQLTGQKALSGNKRSHALNTTKRTFDLNLQKVTVLQENGTKKTLRVTAKNARTLKKLGLVA.

Positions 1–21 are disordered; it reads MPGRDQLTGQKALSGNKRSHA.

It belongs to the bacterial ribosomal protein bL28 family.

In Metamycoplasma arthritidis (strain 158L3-1) (Mycoplasma arthritidis), this protein is Large ribosomal subunit protein bL28.